Reading from the N-terminus, the 406-residue chain is Vacuole membrane protein 1 (406 aa).

Basic and acidic residues predominate over residues 1 to 20 (MAENGKNCDQRRVAMNKEQH). The disordered stretch occupies residues 1 to 36 (MAENGKNCDQRRVAMNKEQHNGNFTDPSSVNEKKRR). An N-acetylalanine modification is found at A2. Over 2–43 (AENGKNCDQRRVAMNKEQHNGNFTDPSSVNEKKRREREERQN) the chain is Cytoplasmic. The segment covering 21–30 (NGNFTDPSSV) has biased composition (polar residues). A helical membrane pass occupies residues 44–64 (IVLWRQPLITLQYFSLEILVI). The Extracellular portion of the chain corresponds to 65 to 77 (LKEWTSKLWHRQS). A helical transmembrane segment spans residues 78-98 (IVVSFLLLLAVLIATYYVEGA). Residues 99–109 (HQQYVQRIEKQ) lie on the Cytoplasmic side of the membrane. The chain crosses the membrane as a helical span at residues 110–130 (FLLYAYWIGLGILSSVGLGTG). The Extracellular segment spans residues 131 to 250 (LHTFLLYLGP…ASRAKLAVQK (120 aa)). A VTT domain region spans residues 173–316 (GTEGTISLWS…FVIITFSKHI (144 aa)). The helical transmembrane segment at 251-271 (LVQKVGFFGILACASIPNPLF) threads the bilayer. The Cytoplasmic segment spans residues 272-273 (DL). A helical membrane pass occupies residues 274–294 (AGITCGHFLVPFWTFFGATLI). Residues 295 to 305 (GKAIIKMHIQK) lie on the Extracellular side of the membrane. Residues 306–326 (IFVIITFSKHIVEQMVAFIGA) traverse the membrane as a helical segment. Residues 327-363 (VPGIGPSLQKPFQEYLEAQRQKLHHKSEMGTPQGENW) lie on the Cytoplasmic side of the membrane. Residues 364–384 (LSWMFEKLVVVMVCYFILSII) form a helical membrane-spanning segment. The Extracellular portion of the chain corresponds to 385–406 (NSMAQSYAKRIQQRLNSEEKTK).

It belongs to the VMP1 family. In terms of assembly, interacts with BECN1. Interacts with TJP1. Interacts with TP53INP2. Interacts with TMEM41B. Interacts with ATP2A2, PLN and SLN; competes with PLN and SLN to prevent them from forming an inhibitory complex with ATP2A2. Interacts with ATG2A.

Its subcellular location is the endoplasmic reticulum-Golgi intermediate compartment membrane. It localises to the cell membrane. The protein localises to the vacuole membrane. It is found in the endoplasmic reticulum membrane. The enzyme catalyses a 1,2-diacyl-sn-glycero-3-phospho-L-serine(in) = a 1,2-diacyl-sn-glycero-3-phospho-L-serine(out). The catalysed reaction is cholesterol(in) = cholesterol(out). It carries out the reaction a 1,2-diacyl-sn-glycero-3-phosphocholine(in) = a 1,2-diacyl-sn-glycero-3-phosphocholine(out). It catalyses the reaction a 1,2-diacyl-sn-glycero-3-phosphoethanolamine(in) = a 1,2-diacyl-sn-glycero-3-phosphoethanolamine(out). Phospholipid scramblase involved in lipid homeostasis and membrane dynamics processes. Has phospholipid scramblase activity toward cholesterol and phosphatidylserine, as well as phosphatidylethanolamine and phosphatidylcholine. Required for autophagosome formation: participates in early stages of autophagosome biogenesis at the endoplasmic reticulum (ER) membrane by reequilibrating the leaflets of the ER as lipids are extracted by ATG2 (ATG2A or ATG2B) to mediate autophagosome assembly. Regulates ATP2A2 activity to control ER-isolation membrane contacts for autophagosome formation. In addition to autophagy, involved in other processes in which phospholipid scramblase activity is required. Modulates ER contacts with lipid droplets, mitochondria and endosomes. Plays an essential role in formation of cell junctions. Upon stress such as bacterial and viral infection, promotes formation of cytoplasmic vacuoles followed by cell death. Involved in the cytoplasmic vacuolization of acinar cells during the early stage of acute pancreatitis. The protein is Vacuole membrane protein 1 of Pongo abelii (Sumatran orangutan).